The sequence spans 34 residues: Photosystem II reaction center protein M (34 aa).

Residues 5 to 25 (ILAFIATALFILIPTAFLLII) traverse the membrane as a helical segment.

The protein belongs to the PsbM family. As to quaternary structure, PSII is composed of 1 copy each of membrane proteins PsbA, PsbB, PsbC, PsbD, PsbE, PsbF, PsbH, PsbI, PsbJ, PsbK, PsbL, PsbM, PsbT, PsbX, PsbY, PsbZ, Psb30/Ycf12, at least 3 peripheral proteins of the oxygen-evolving complex and a large number of cofactors. It forms dimeric complexes.

It localises to the plastid. Its subcellular location is the chloroplast thylakoid membrane. In terms of biological role, one of the components of the core complex of photosystem II (PSII). PSII is a light-driven water:plastoquinone oxidoreductase that uses light energy to abstract electrons from H(2)O, generating O(2) and a proton gradient subsequently used for ATP formation. It consists of a core antenna complex that captures photons, and an electron transfer chain that converts photonic excitation into a charge separation. This subunit is found at the monomer-monomer interface. The chain is Photosystem II reaction center protein M from Lolium perenne (Perennial ryegrass).